A 113-amino-acid chain; its full sequence is MQFKFLSTVALATLAVAAPAPTDPTPIPPSQCNTGPIQCCNTVTQASNPVAGLLLGLLGIVLQDLNVLVGLTCSPISIIGLPGNSCNAQPVCCQNNNFNGLIAIGCTPININL.

Positions 1–17 (MQFKFLSTVALATLAVA) are cleaved as a signal peptide. Cystine bridges form between Cys-32–Cys-92, Cys-39–Cys-86, Cys-40–Cys-73, and Cys-93–Cys-106.

The protein belongs to the fungal hydrophobin family. Self-assembles to form functional amyloid fibrils called rodlets. Self-assembly into fibrillar rodlets occurs spontaneously at hydrophobic:hydrophilic interfaces and the rodlets further associate laterally to form amphipathic monolayers.

Its subcellular location is the secreted. The protein resides in the cell wall. Functionally, aerial growth, conidiation, and dispersal of filamentous fungi in the environment rely upon a capability of their secreting small amphipathic proteins called hydrophobins (HPBs) with low sequence identity. Class I can self-assemble into an outermost layer of rodlet bundles on aerial cell surfaces, conferring cellular hydrophobicity that supports fungal growth, development and dispersal; whereas Class II form highly ordered films at water-air interfaces through intermolecular interactions but contribute nothing to the rodlet structure. CoH1 is an asexual monokaryon-specific class I hydrophobin that is involved in aerial growth of mycelia. This chain is Class I hydrophobin 1, found in Coprinopsis cinerea (Inky cap fungus).